A 904-amino-acid chain; its full sequence is Protein translocase subunit SecA (904 aa).

ATP-binding positions include Q89, 107-111, and D502; that span reads GEGKT. Zn(2+)-binding residues include C886, C888, C897, and H898.

Belongs to the SecA family. As to quaternary structure, monomer and homodimer. Part of the essential Sec protein translocation apparatus which comprises SecA, SecYEG and auxiliary proteins SecDF-YajC and YidC. Zn(2+) is required as a cofactor.

It is found in the cell inner membrane. It localises to the cytoplasm. The enzyme catalyses ATP + H2O + cellular proteinSide 1 = ADP + phosphate + cellular proteinSide 2.. In terms of biological role, part of the Sec protein translocase complex. Interacts with the SecYEG preprotein conducting channel. Has a central role in coupling the hydrolysis of ATP to the transfer of proteins into and across the cell membrane, serving both as a receptor for the preprotein-SecB complex and as an ATP-driven molecular motor driving the stepwise translocation of polypeptide chains across the membrane. The protein is Protein translocase subunit SecA of Rhizobium etli (strain CIAT 652).